Consider the following 299-residue polypeptide: Aliphatic sulfonates import ATP-binding protein SsuB (299 aa).

The 222-residue stretch at 36–257 (LHVQQVIKRY…QHGSAAFAQI (222 aa)) folds into the ABC transporter domain. 68 to 75 (GRSGCGKS) contacts ATP.

Belongs to the ABC transporter superfamily. Aliphatic sulfonates importer (TC 3.A.1.17.2) family. In terms of assembly, the complex is composed of two ATP-binding proteins (SsuB), two transmembrane proteins (SsuC) and a solute-binding protein (SsuA).

It localises to the cell inner membrane. It catalyses the reaction ATP + H2O + aliphatic sulfonate-[sulfonate-binding protein]Side 1 = ADP + phosphate + aliphatic sulfonateSide 2 + [sulfonate-binding protein]Side 1.. Part of the ABC transporter complex SsuABC involved in aliphatic sulfonates import. Responsible for energy coupling to the transport system. In Cupriavidus pinatubonensis (strain JMP 134 / LMG 1197) (Cupriavidus necator (strain JMP 134)), this protein is Aliphatic sulfonates import ATP-binding protein SsuB.